Consider the following 753-residue polypeptide: Polyribonucleotide nucleotidyltransferase (753 aa).

Mg(2+) contacts are provided by D488 and D494. Positions 555–614 constitute a KH domain; that stretch reads PRLLRTKISPDKIGALIGPGGKNIRGIQETTGAVIEVDDEGTVLVASSNKESAQEAMRQV. The S1 motif domain maps to 624–692; sequence GKIYDGTVSS…EHDRVKLSRR (69 aa). Residues 698-719 are compositionally biased toward acidic residues; sequence LGEEDPLAVEGEGGGDSEGGGD. The tract at residues 698–753 is disordered; the sequence is LGEEDPLAVEGEGGGDSEGGGDGEDRPRRRRGGSGGGGGGGRGRGPRRSGGGRDRD. Over residues 730–740 the composition is skewed to gly residues; it reads GSGGGGGGGRG.

Belongs to the polyribonucleotide nucleotidyltransferase family. Mg(2+) serves as cofactor.

The protein resides in the cytoplasm. The enzyme catalyses RNA(n+1) + phosphate = RNA(n) + a ribonucleoside 5'-diphosphate. Functionally, involved in mRNA degradation. Catalyzes the phosphorolysis of single-stranded polyribonucleotides processively in the 3'- to 5'-direction. In Rhodopirellula baltica (strain DSM 10527 / NCIMB 13988 / SH1), this protein is Polyribonucleotide nucleotidyltransferase.